Here is a 173-residue protein sequence, read N- to C-terminus: Adenine phosphoribosyltransferase (173 aa).

This sequence belongs to the purine/pyrimidine phosphoribosyltransferase family. In terms of assembly, homodimer.

Its subcellular location is the cytoplasm. The enzyme catalyses AMP + diphosphate = 5-phospho-alpha-D-ribose 1-diphosphate + adenine. Its pathway is purine metabolism; AMP biosynthesis via salvage pathway; AMP from adenine: step 1/1. In terms of biological role, catalyzes a salvage reaction resulting in the formation of AMP, that is energically less costly than de novo synthesis. The chain is Adenine phosphoribosyltransferase from Thermoanaerobacter pseudethanolicus (strain ATCC 33223 / 39E) (Clostridium thermohydrosulfuricum).